The primary structure comprises 79 residues: Acyl carrier protein (79 aa).

Residues 2–77 (ENIEQRVKKI…QAIDYVTAHL (76 aa)) form the Carrier domain. Residue Ser37 is modified to O-(pantetheine 4'-phosphoryl)serine.

This sequence belongs to the acyl carrier protein (ACP) family. Post-translationally, 4'-phosphopantetheine is transferred from CoA to a specific serine of apo-ACP by AcpS. This modification is essential for activity because fatty acids are bound in thioester linkage to the sulfhydryl of the prosthetic group.

Its subcellular location is the cytoplasm. It participates in lipid metabolism; fatty acid biosynthesis. Carrier of the growing fatty acid chain in fatty acid biosynthesis. This Aromatoleum aromaticum (strain DSM 19018 / LMG 30748 / EbN1) (Azoarcus sp. (strain EbN1)) protein is Acyl carrier protein.